A 691-amino-acid polypeptide reads, in one-letter code: MFCAKLKDLQITGDCPFSLLAPGQVPREPLGEATGSGPASTPGQPGVCPGVPDKNPPGRLPRRKTSRSRVYLHTLAESICKLIFPEFERLNLALQRTLAKHKIKENRKSLEREDFEKIVVDQAIAAGVPVEIIKESLGEELFKICYEEDEYILGVVGGTLKDFLNSFSTLLKQSSHCQEAEKKGRFEDASILCLDKDPDVLYVYYFFPKRITSLILPGIIKAAARILYETEVEVSSTPSRFHQDCREFVDQPCELYSVHIRSARPHPPPGKPVSSLVIPASLFCKTFPFHFMLDRDMSILQLGHGIRRLMSRRDVQGKPHFDEYFEILTPKISQTFSGIMTMLNMQFLVRVRRWDNSMKKSSRVMDLKGQMIYMVESSSILFLGSPCVDRLEDFTGRGLYLSDIPIHNALRDVVLIGEQARAQDGLKKRLGKLKATLEQAHQALEEEKRKTVDLLCSIFPSEVARQLWQGHAVQAKRFGNVTMLFSDIVGFTAICSQCSPLQVITMLNALYTRFDRQCGELDVYKVETIGDAYCVAGGLHKESDTHAVQIALMALKMMELSHEVVSPHGEPIKMRIGLHSGSVFAGVVGVKMPRYCLFGNNVTLANKFESCSVPRKINVSPTTYRLLKDCPGFVFTPRSREELPPNFPSDIPGICHFLEAYQQGTTSKPWFQKKDVEEANANFLGKASGID.

Positions P26–T65 are disordered. The 128-residue stretch at T482–E609 folds into the Guanylate cyclase domain.

This sequence belongs to the adenylyl cyclase class-4/guanylyl cyclase family. In terms of assembly, heterodimer of an alpha and a beta chain.

It is found in the cytoplasm. The catalysed reaction is GTP = 3',5'-cyclic GMP + diphosphate. Its activity is regulated as follows. Activated by nitric oxide in the presence of magnesium or manganese ions. This chain is Guanylate cyclase soluble subunit alpha-1 (GUCY1A1), found in Bos taurus (Bovine).